The following is a 217-amino-acid chain: NADPH-dependent 3-demethoxyubiquinone 3-hydroxylase, mitochondrial (217 aa).

Repeat copies occupy residues 49–130 (IIER…SALM) and 131–217 (GKEA…STRV). Positions 49-217 (IIERIIRVDH…KTAIWLSTRV (169 aa)) are 2 X approximate tandem repeats. Arg52 serves as a coordination point for NADH. Glu61, Glu91, His94, Glu143, Glu178, and His181 together coordinate Fe cation. Position 216 (Arg216) interacts with NADH.

This sequence belongs to the COQ7 family. As to quaternary structure, component of a multi-subunit COQ enzyme complex. Fe cation serves as cofactor.

The protein localises to the mitochondrion inner membrane. The catalysed reaction is a 5-methoxy-2-methyl-3-(all-trans-polyprenyl)benzoquinone + NADH + O2 = a 3-demethylubiquinone + NAD(+) + H2O. The protein operates within cofactor biosynthesis; ubiquinone biosynthesis. Catalyzes the hydroxylation of the 5-methoxy-2-methyl-3-(all-trans-polyprenyl)benzoquinone at the C6 position and participates in the biosynthesis of ubiquinone. Catalyzes the reaction through a substrate-mediated reduction pathway, whereby NADH shuttles electrons to 5-methoxy-2-methyl-3-(all-trans-decaprenyl)benzoquinone, which then transfers the electrons to the two Fe(3+) centers. The binding of 5-methoxy-2-methyl-3-(all-trans-polyprenyl)benzoquinone (DMQn) mediates reduction of the diiron center by nicotinamide adenine dinucleotide (NADH) and initiates oxygen activation for subsequent DMQ hydroxylation. Also has a structural role in the COQ enzyme complex, stabilizing other COQ polypeptides. This is NADPH-dependent 3-demethoxyubiquinone 3-hydroxylase, mitochondrial from Dictyostelium discoideum (Social amoeba).